The following is a 164-amino-acid chain: Ribosome maturation factor RimM (164 aa).

One can recognise a PRC barrel domain in the interval 90–161; the sequence is KGSYFIADLI…TVTIKPLEIW (72 aa).

Belongs to the RimM family. In terms of assembly, binds ribosomal protein uS19.

The protein localises to the cytoplasm. An accessory protein needed during the final step in the assembly of 30S ribosomal subunit, possibly for assembly of the head region. Essential for efficient processing of 16S rRNA. May be needed both before and after RbfA during the maturation of 16S rRNA. It has affinity for free ribosomal 30S subunits but not for 70S ribosomes. The protein is Ribosome maturation factor RimM of Clostridium botulinum (strain Langeland / NCTC 10281 / Type F).